A 290-amino-acid polypeptide reads, in one-letter code: Probable endonuclease 4 (290 aa).

Residues H69, H109, E145, D179, H182, H216, D229, H231, and E261 each contribute to the Zn(2+) site.

The protein belongs to the AP endonuclease 2 family. Requires Zn(2+) as cofactor.

It catalyses the reaction Endonucleolytic cleavage to 5'-phosphooligonucleotide end-products.. Its function is as follows. Endonuclease IV plays a role in DNA repair. It cleaves phosphodiester bonds at apurinic or apyrimidinic (AP) sites, generating a 3'-hydroxyl group and a 5'-terminal sugar phosphate. The polypeptide is Probable endonuclease 4 (Chlorobium limicola (strain DSM 245 / NBRC 103803 / 6330)).